A 270-amino-acid chain; its full sequence is Pre-mRNA-splicing factor CWC23 (270 aa).

Residues 12-84 form the J domain; the sequence is DLYRILHIHV…EHKKEYDIWY (73 aa).

The protein belongs to the DnaJ family. As to quaternary structure, associated with the spliceosome.

Its subcellular location is the cytoplasm. The protein localises to the nucleus. In terms of biological role, involved in pre-mRNA splicing. May be involved in endoplasmic reticulum-associated protein degradation (ERAD) and required for growth at low and high temperatures. The sequence is that of Pre-mRNA-splicing factor CWC23 (CWC23) from Kluyveromyces lactis (strain ATCC 8585 / CBS 2359 / DSM 70799 / NBRC 1267 / NRRL Y-1140 / WM37) (Yeast).